The chain runs to 717 residues: DNA-directed RNA polymerase subunit beta' (717 aa).

The Zn(2+) site is built by Cys-71, Cys-73, Cys-91, and Cys-94. The Mg(2+) site is built by Asp-481, Asp-483, and Asp-485.

Belongs to the RNA polymerase beta' chain family. RpoC1 subfamily. In terms of assembly, in plastids the minimal PEP RNA polymerase catalytic core is composed of four subunits: alpha, beta, beta', and beta''. When a (nuclear-encoded) sigma factor is associated with the core the holoenzyme is formed, which can initiate transcription. It depends on Mg(2+) as a cofactor. The cofactor is Zn(2+).

Its subcellular location is the plastid. It is found in the chloroplast. It carries out the reaction RNA(n) + a ribonucleoside 5'-triphosphate = RNA(n+1) + diphosphate. DNA-dependent RNA polymerase catalyzes the transcription of DNA into RNA using the four ribonucleoside triphosphates as substrates. This chain is DNA-directed RNA polymerase subunit beta', found in Chlorokybus atmophyticus (Soil alga).